Consider the following 213-residue polypeptide: Putative manganese efflux pump MntP (213 aa).

6 consecutive transmembrane segments (helical) span residues 3-23 (ILSI…VSVA), 36-56 (ALKV…IGWG), 67-87 (AFDH…MIFE), 130-150 (LAIA…FLGI), 152-172 (IVQT…LGVI), and 187-207 (IVGG…HTGI).

The protein belongs to the MntP (TC 9.B.29) family.

It is found in the cell membrane. Its function is as follows. Probably functions as a manganese efflux pump. This Clostridium perfringens (strain 13 / Type A) protein is Putative manganese efflux pump MntP.